We begin with the raw amino-acid sequence, 253 residues long: MQYTELVPGTLIRRYKRFLADVALASGDVVVAHCPNTGSMRAVDVPGCRVWLSPSRNPARKLAWTWELIELPMPDAPPALVSVHTGRANALVAQALQEARIPELAGYDTHKREVRVADARLDFRLSTAHAAAYVEVKQVTLREHDGHGYFPDSVSERGRRHLEALAARVAEGDRAVLLFCVAHTGIDAVAPAAHLDPAYAETLRRVAAQGVEVLAYGMSATWTHDGVPGDIALTRALPVSLERRLASATPLSD.

The protein belongs to the SfsA family.

The polypeptide is Sugar fermentation stimulation protein homolog (Chromohalobacter salexigens (strain ATCC BAA-138 / DSM 3043 / CIP 106854 / NCIMB 13768 / 1H11)).